The chain runs to 96 residues: (4S)-4-hydroxy-5-phosphonooxypentane-2,3-dione isomerase (96 aa).

The ABM domain occupies 2–91 (HVTLVEINVH…MTGPRKKRLF (90 aa)).

This sequence belongs to the LsrG family. Homodimer.

It is found in the cytoplasm. It carries out the reaction (2S)-2-hydroxy-3,4-dioxopentyl phosphate = 3-hydroxy-2,4-dioxopentyl phosphate. In terms of biological role, involved in the degradation of phospho-AI-2, thereby terminating induction of the lsr operon and closing the AI-2 signaling cycle. Catalyzes the conversion of (4S)-4-hydroxy-5-phosphonooxypentane-2,3-dione (P-DPD) to 3-hydroxy-5-phosphonooxypentane-2,4-dione (P-HPD). This is (4S)-4-hydroxy-5-phosphonooxypentane-2,3-dione isomerase from Escherichia coli O157:H7.